Here is a 446-residue protein sequence, read N- to C-terminus: Phosphoglucosamine mutase (446 aa).

S102 acts as the Phosphoserine intermediate in catalysis. Positions 102, 241, 243, and 245 each coordinate Mg(2+). Position 102 is a phosphoserine (S102).

It belongs to the phosphohexose mutase family. The cofactor is Mg(2+). Activated by phosphorylation.

It catalyses the reaction alpha-D-glucosamine 1-phosphate = D-glucosamine 6-phosphate. In terms of biological role, catalyzes the conversion of glucosamine-6-phosphate to glucosamine-1-phosphate. The polypeptide is Phosphoglucosamine mutase (Xylella fastidiosa (strain M23)).